Consider the following 1089-residue polypeptide: Carbamoyl phosphate synthase large chain (1089 aa).

The segment at 1 to 399 (MPKRTDIKSI…SIQKALCSLE (399 aa)) is carboxyphosphate synthetic domain. Residues R127, R167, G173, G174, E206, L208, E213, G239, V240, H241, Q283, and E297 each contribute to the ATP site. Positions 131–326 (KECMKKIGMD…IAKVATLLAV (196 aa)) constitute an ATP-grasp 1 domain. The Mg(2+) site is built by Q283, E297, and N299. Q283, E297, and N299 together coordinate Mn(2+). Residues 400–553 (RSLSGFDRVK…NVSELTQSKN (154 aa)) are oligomerization domain. Residues 554-951 (DAKDKKEKKV…SYAKSQIASF (398 aa)) form a carbamoyl phosphate synthetic domain region. Positions 680 to 871 (AEFITKLGIN…LAKVATRVMW (192 aa)) constitute an ATP-grasp 2 domain. Residues R716, Q755, L757, E762, G787, I788, H789, S790, Q830, and E842 each contribute to the ATP site. Q830, E842, and N844 together coordinate Mg(2+). The Mn(2+) site is built by Q830, E842, and N844. The MGS-like domain maps to 952 to 1089 (NHLPEQGVVF…VKSLQEWLKS (138 aa)). An allosteric domain region spans residues 952 to 1089 (NHLPEQGVVF…VKSLQEWLKS (138 aa)).

This sequence belongs to the CarB family. As to quaternary structure, composed of two chains; the small (or glutamine) chain promotes the hydrolysis of glutamine to ammonia, which is used by the large (or ammonia) chain to synthesize carbamoyl phosphate. Tetramer of heterodimers (alpha,beta)4. Mg(2+) is required as a cofactor. The cofactor is Mn(2+).

It catalyses the reaction hydrogencarbonate + L-glutamine + 2 ATP + H2O = carbamoyl phosphate + L-glutamate + 2 ADP + phosphate + 2 H(+). It carries out the reaction hydrogencarbonate + NH4(+) + 2 ATP = carbamoyl phosphate + 2 ADP + phosphate + 2 H(+). It participates in amino-acid biosynthesis; L-arginine biosynthesis; carbamoyl phosphate from bicarbonate: step 1/1. Its pathway is pyrimidine metabolism; UMP biosynthesis via de novo pathway; (S)-dihydroorotate from bicarbonate: step 1/3. Its function is as follows. Large subunit of the glutamine-dependent carbamoyl phosphate synthetase (CPSase). CPSase catalyzes the formation of carbamoyl phosphate from the ammonia moiety of glutamine, carbonate, and phosphate donated by ATP, constituting the first step of 2 biosynthetic pathways, one leading to arginine and/or urea and the other to pyrimidine nucleotides. The large subunit (synthetase) binds the substrates ammonia (free or transferred from glutamine from the small subunit), hydrogencarbonate and ATP and carries out an ATP-coupled ligase reaction, activating hydrogencarbonate by forming carboxy phosphate which reacts with ammonia to form carbamoyl phosphate. The sequence is that of Carbamoyl phosphate synthase large chain from Campylobacter jejuni subsp. jejuni serotype O:2 (strain ATCC 700819 / NCTC 11168).